We begin with the raw amino-acid sequence, 240 residues long: Diglucosylglycerate octanoyltransferase (240 aa).

It belongs to the OctT acyltransferase family. Homotetramer.

The catalysed reaction is (2R)-2-O-[alpha-D-glucopyranosyl-(1-&gt;6)-alpha-D-glucopyranosyl]-glycerate + octanoyl-CoA = (2R)-2-O-[6-O-octanoyl-alpha-D-glucopyranosyl-(1-&gt;6)-alpha-D-glucopyranosyl]-glycerate + CoA. Sugar octanoyltransferase likely involved in the biosynthesis of mycobacterial methylglucose lipopolysaccharide (MGLP). Catalyzes the transfer of an octanoyl group from octanoyl-CoA to the C6 OH of the second glucose in diglucosylglycerate (DGG). Can also use hexanoyl-CoA as acyl donor in vitro. DGG is the preferred acceptor, but to a lesser extent, GG (glucosylglycerate) can be used as substrate. DGG and GG are the two earliest intermediates in MGLP biosynthesis. The chain is Diglucosylglycerate octanoyltransferase from Mycolicibacterium hassiacum (strain DSM 44199 / CIP 105218 / JCM 12690 / 3849) (Mycobacterium hassiacum).